We begin with the raw amino-acid sequence, 243 residues long: Ice-binding protein K3-B1 (243 aa).

An N-terminal signal peptide occupies residues 1-20 (MFSASSLLAVIALAISSVSA).

The protein belongs to the ice-binding protein family.

Binds to the surface of ice crystals. Has low thermal hysteresis (TH) activity, which is the ability to lower the freezing point of an aqueous solution below its melting point. The TH activity of this protein is approximately 0.3 degrees Celsius at 11 mM. The polypeptide is Ice-binding protein K3-B1 (Typhula ishikariensis (Gray snow mold fungus)).